Here is a 657-residue protein sequence, read N- to C-terminus: Protein FAM200B (657 aa).

This sequence belongs to the FAM200 family.

In Homo sapiens (Human), this protein is Protein FAM200B.